The following is a 368-amino-acid chain: ATP-dependent (S)-NAD(P)H-hydrate dehydratase (368 aa).

Residues 3–359 (SPSKKLLANV…DEVHGSFLDL (357 aa)) enclose the YjeF C-terminal domain. Residues Gly-120 and 173–179 (NVVEFAR) each bind (6S)-NADPHX. ATP contacts are provided by residues 217-221 (KGPHD) and 236-245 (GGLKRSGGQG). Asp-246 is a binding site for (6S)-NADPHX.

Belongs to the NnrD/CARKD family. Mg(2+) serves as cofactor.

The protein resides in the cytoplasm. It carries out the reaction (6S)-NADHX + ATP = ADP + phosphate + NADH + H(+). It catalyses the reaction (6S)-NADPHX + ATP = ADP + phosphate + NADPH + H(+). Its function is as follows. Catalyzes the dehydration of the S-form of NAD(P)HX at the expense of ATP, which is converted to ADP. Together with NAD(P)HX epimerase, which catalyzes the epimerization of the S- and R-forms, the enzyme allows the repair of both epimers of NAD(P)HX, a damaged form of NAD(P)H that is a result of enzymatic or heat-dependent hydration. This Ajellomyces capsulatus (strain G186AR / H82 / ATCC MYA-2454 / RMSCC 2432) (Darling's disease fungus) protein is ATP-dependent (S)-NAD(P)H-hydrate dehydratase.